The sequence spans 204 residues: Peptidyl-prolyl cis-trans isomerase CYP20-1 (204 aa).

The N-terminal stretch at 1–23 (MASSVTLLLWSLLLLGTLSAIQA) is a signal peptide. Residues 38–201 (YFDVEIDGKA…SKVVIVDSGE (164 aa)) enclose the PPIase cyclophilin-type domain.

This sequence belongs to the cyclophilin-type PPIase family. Interacts with the PP2A A subunit PP2AA1/RCN1. In terms of tissue distribution, ubiquitous, mostly in aerial organs. Higher levels in leaf and buds, and lower levels in seedlings.

The protein localises to the endoplasmic reticulum. It localises to the secreted. The catalysed reaction is [protein]-peptidylproline (omega=180) = [protein]-peptidylproline (omega=0). With respect to regulation, binds cyclosporin A (CsA). CsA mediates some of its effects via an inhibitory action on PPIase. PPIases accelerate the folding of proteins. It catalyzes the cis-trans isomerization of proline imidic peptide bonds in oligopeptides. Seems to be involved in root development. This is Peptidyl-prolyl cis-trans isomerase CYP20-1 (CYP20-1) from Arabidopsis thaliana (Mouse-ear cress).